Here is a 308-residue protein sequence, read N- to C-terminus: Acetyl-coenzyme A carboxylase carboxyl transferase subunit beta (308 aa).

The CoA carboxyltransferase N-terminal domain maps to L26–L295.

The protein belongs to the AccD/PCCB family. Acetyl-CoA carboxylase is a heterohexamer composed of biotin carboxyl carrier protein (AccB), biotin carboxylase (AccC) and two subunits each of ACCase subunit alpha (AccA) and ACCase subunit beta (AccD).

The protein resides in the cytoplasm. The enzyme catalyses N(6)-carboxybiotinyl-L-lysyl-[protein] + acetyl-CoA = N(6)-biotinyl-L-lysyl-[protein] + malonyl-CoA. The protein operates within lipid metabolism; malonyl-CoA biosynthesis; malonyl-CoA from acetyl-CoA: step 1/1. Functionally, component of the acetyl coenzyme A carboxylase (ACC) complex. Biotin carboxylase (BC) catalyzes the carboxylation of biotin on its carrier protein (BCCP) and then the CO(2) group is transferred by the transcarboxylase to acetyl-CoA to form malonyl-CoA. This is Acetyl-coenzyme A carboxylase carboxyl transferase subunit beta from Mesorhizobium japonicum (strain LMG 29417 / CECT 9101 / MAFF 303099) (Mesorhizobium loti (strain MAFF 303099)).